Here is an 885-residue protein sequence, read N- to C-terminus: High affinity cAMP-specific and IBMX-insensitive 3',5'-cyclic phosphodiesterase 8B (885 aa).

Disordered stretches follow at residues 18–41 and 72–95; these read RDSD…APLP and TELG…GRRR. The span at 23–34 shows a compositional bias: polar residues; it reads SSSPRQTTSVSQ. The span at 75 to 90 shows a compositional bias: low complexity; it reads GSGSSAGSAAPAATTS. The PAS domain maps to 267–338; it reads ACNSVFTALD…DTINTCIKKG (72 aa). A disordered region spans residues 393-436; sequence IHRDSGDNSQTEPHSFRYKNRRKESIDVKSISSRGSDAPSLQNR. Over residues 422–436 the composition is skewed to polar residues; that stretch reads SISSRGSDAPSLQNR. Serine 517 is subject to Phosphoserine. The PDEase domain maps to 539-875; sequence TINDVPPCIS…KHWKTLDDLK (337 aa). Residue histidine 615 is the Proton donor of the active site. A divalent metal cation-binding residues include histidine 619, histidine 655, and aspartate 656. Serine 754 is subject to Phosphoserine. Aspartate 781 lines the a divalent metal cation pocket.

This sequence belongs to the cyclic nucleotide phosphodiesterase family. PDE8 subfamily. It depends on a divalent metal cation as a cofactor. Abundantly expressed in the thyroid. Also very weakly expressed in brain, spinal cord and placenta. In the thyroid isoform 1 predominates, and isoforms 2 and 6 are also highly expressed. In the placenta isoforms 1 and 2 are expressed equally. In the brain isoform 2 predominates.

The catalysed reaction is 3',5'-cyclic AMP + H2O = AMP + H(+). Its pathway is purine metabolism; 3',5'-cyclic AMP degradation; AMP from 3',5'-cyclic AMP: step 1/1. With respect to regulation, inhibited by dipyridimole. Insensitive to selective PDE inhibitors including rolipram and milrinone as well as to the non-selective inhibitor, IBMX. Unaffected by cGMP. Hydrolyzes the second messenger cAMP, which is a key regulator of many important physiological processes. May be involved in specific signaling in the thyroid gland. This Homo sapiens (Human) protein is High affinity cAMP-specific and IBMX-insensitive 3',5'-cyclic phosphodiesterase 8B (PDE8B).